The primary structure comprises 277 residues: MSVPTVLERIIARKFQEVAERSARVSLAELEGLAKAADAPRGFANALIEQAKRKQPAVIAEIKKASPSKGVIREHFVPAEIAVSYEKGGATCLSVLTDVDYFQGADEYLQQARAAVSLPVIRKDFMVDPYQIVEARALGADCVLLIVSALDDVKMAELAATAKDVGLDVLVEVHDGDELERALKTLDTPLVGVNNRNLHTFEVSLETTLDLLPRIPRDRLAITESGILNRADVELMAINEVYSFLVGEAFMRAEQPGLELQRLFFPEQVKKTVQQLD.

This sequence belongs to the TrpC family.

The catalysed reaction is 1-(2-carboxyphenylamino)-1-deoxy-D-ribulose 5-phosphate + H(+) = (1S,2R)-1-C-(indol-3-yl)glycerol 3-phosphate + CO2 + H2O. The protein operates within amino-acid biosynthesis; L-tryptophan biosynthesis; L-tryptophan from chorismate: step 4/5. This chain is Indole-3-glycerol phosphate synthase, found in Pseudomonas putida (strain ATCC 700007 / DSM 6899 / JCM 31910 / BCRC 17059 / LMG 24140 / F1).